A 203-amino-acid polypeptide reads, in one-letter code: Outer-membrane lipoprotein carrier protein (203 aa).

An N-terminal signal peptide occupies residues 1–20 (MKKWLAISCLIAGMTSTAVY).

This sequence belongs to the LolA family. In terms of assembly, monomer.

It localises to the periplasm. In terms of biological role, participates in the translocation of lipoproteins from the inner membrane to the outer membrane. Only forms a complex with a lipoprotein if the residue after the N-terminal Cys is not an aspartate (The Asp acts as a targeting signal to indicate that the lipoprotein should stay in the inner membrane). This Pectobacterium carotovorum subsp. carotovorum (strain PC1) protein is Outer-membrane lipoprotein carrier protein.